Here is a 163-residue protein sequence, read N- to C-terminus: Protein-export protein SecB (163 aa).

Belongs to the SecB family. As to quaternary structure, homotetramer, a dimer of dimers. One homotetramer interacts with 1 SecA dimer.

The protein resides in the cytoplasm. Functionally, one of the proteins required for the normal export of preproteins out of the cell cytoplasm. It is a molecular chaperone that binds to a subset of precursor proteins, maintaining them in a translocation-competent state. It also specifically binds to its receptor SecA. In Pseudomonas aeruginosa (strain LESB58), this protein is Protein-export protein SecB.